Here is a 343-residue protein sequence, read N- to C-terminus: Arginine-hydroxylase NDUFAF5, mitochondrial (343 aa).

The transit peptide at 1 to 29 (MLRRVVLSRLYARLGGPAVSAGRGGRRGV) directs the protein to the mitochondrion. A disordered region spans residues 18 to 40 (AVSAGRGGRRGVASSVPPSGSTS).

Belongs to the methyltransferase superfamily. Interacts with NDUFAF8, leading to stabilize NDUFAF5. Interacts with NDUFS7. Interacts with PYURF (via TRM112 domain); the interaction is direct and stabilizes NDUFAF5 protein.

The protein resides in the mitochondrion inner membrane. Arginine hydroxylase that mediates hydroxylation of 'Arg-111' of NDUFS7 and is involved in the assembly of mitochondrial NADH:ubiquinone oxidoreductase complex (complex I, MT-ND1) at early stages. May also have methyltransferase activity. The sequence is that of Arginine-hydroxylase NDUFAF5, mitochondrial from Rattus norvegicus (Rat).